The following is a 363-amino-acid chain: Mitogen-activated protein kinase kinase 2 (363 aa).

Ser56 is modified (phosphoserine). In terms of domain architecture, Protein kinase spans 70-330 (LDMVKVIGKG…AKELMEHPFL (261 aa)). Residues 76-84 (IGKGSSGVV) and Lys99 each bind ATP. The active-site Proton acceptor is the Asp192. Phosphothreonine occurs at positions 220, 226, and 230.

The protein belongs to the protein kinase superfamily. STE Ser/Thr protein kinase family. MAP kinase kinase subfamily. As to quaternary structure, interacts with MEKK1, MPK4 and MPK6. May form a ternary complex composed of MEKK1 and MKK1/MKK2 and MPK4. Interacts with MPK10 and MPK11. Interacts with MAPKKK5 mainly in the cytosol. In terms of processing, phosphorylation at Thr-220 and Thr-226 by MAP kinase kinase kinases positively regulates kinase activity. Phosphorylated by MEKK1 in response to cold. Phosphorylated by MAPKKK5.

It catalyses the reaction L-seryl-[protein] + ATP = O-phospho-L-seryl-[protein] + ADP + H(+). It carries out the reaction L-threonyl-[protein] + ATP = O-phospho-L-threonyl-[protein] + ADP + H(+). The enzyme catalyses L-tyrosyl-[protein] + ATP = O-phospho-L-tyrosyl-[protein] + ADP + H(+). Its activity is regulated as follows. Activated in response to cold and salt stresses through serine and threonine phosphorylation by MEKK1. Functionally, MEKK1, MKK1/MKK2 and MPK4 function in a signaling pathway that modulates the expression of genes responding to biotic and abiotic stresses and also plays an important role in pathogen defense by negatively regulating innate immunity. Plays a role in abiotic stress tolerance and plant disease resistance through activation of MPK4 and MPK6 by phosphorylation. Acts redundantly with MKK1. This is Mitogen-activated protein kinase kinase 2 (MKK2) from Arabidopsis thaliana (Mouse-ear cress).